A 392-amino-acid polypeptide reads, in one-letter code: GTPase Obg (392 aa).

The Obg domain maps to M1–L159. Residues G121–P146 form a disordered region. Positions R129–T145 are enriched in polar residues. The region spanning A160–E333 is the OBG-type G domain. GTP-binding positions include G166–S173, F191–V195, D213–G216, N283–D286, and S314–F316. S173 and T193 together coordinate Mg(2+).

This sequence belongs to the TRAFAC class OBG-HflX-like GTPase superfamily. OBG GTPase family. Monomer. Mg(2+) is required as a cofactor.

The protein resides in the cytoplasm. An essential GTPase which binds GTP, GDP and possibly (p)ppGpp with moderate affinity, with high nucleotide exchange rates and a fairly low GTP hydrolysis rate. Plays a role in control of the cell cycle, stress response, ribosome biogenesis and in those bacteria that undergo differentiation, in morphogenesis control. This chain is GTPase Obg, found in Alteromonas mediterranea (strain DSM 17117 / CIP 110805 / LMG 28347 / Deep ecotype).